A 525-amino-acid chain; its full sequence is Apolipoprotein N-acyltransferase 2 (525 aa).

6 consecutive transmembrane segments (helical) span residues 25 to 45 (ILNF…YYAL), 56 to 76 (FLYG…LAFF), 81 to 101 (IFTL…FGFL), 115 to 135 (FFFA…FLAY), 153 to 173 (FVDI…AACL), and 200 to 220 (LIFT…ILSI). Positions 228–486 (LNTVIVQQNT…AESVYTEVPV (259 aa)) constitute a CN hydrolase domain. E274 functions as the Proton acceptor in the catalytic mechanism. The active site involves K339. C397 acts as the Nucleophile in catalysis. A helical membrane pass occupies residues 495–515 (ASYKDWLPIMMFLILIFNIFL).

Belongs to the CN hydrolase family. Apolipoprotein N-acyltransferase subfamily.

The protein localises to the cell inner membrane. The enzyme catalyses N-terminal S-1,2-diacyl-sn-glyceryl-L-cysteinyl-[lipoprotein] + a glycerophospholipid = N-acyl-S-1,2-diacyl-sn-glyceryl-L-cysteinyl-[lipoprotein] + a 2-acyl-sn-glycero-3-phospholipid + H(+). Its pathway is protein modification; lipoprotein biosynthesis (N-acyl transfer). In terms of biological role, catalyzes the phospholipid dependent N-acylation of the N-terminal cysteine of apolipoprotein, the last step in lipoprotein maturation. This is Apolipoprotein N-acyltransferase 2 from Treponema denticola (strain ATCC 35405 / DSM 14222 / CIP 103919 / JCM 8153 / KCTC 15104).